Reading from the N-terminus, the 709-residue chain is Polyribonucleotide nucleotidyltransferase (709 aa).

Positions 487 and 493 each coordinate Mg(2+). The region spanning 554–613 (PRIHTMKISSDKIKDVIGKGGAVIRALCEETGTTIEIEDDGTIKIAATEGAAAKEAIRRI) is the KH domain. One can recognise an S1 motif domain in the interval 623–691 (GKIYTGKVMR…RQGRIRLSIK (69 aa)).

Belongs to the polyribonucleotide nucleotidyltransferase family. In terms of assembly, component of the RNA degradosome, which is a multiprotein complex involved in RNA processing and mRNA degradation. The cofactor is Mg(2+).

The protein localises to the cytoplasm. The enzyme catalyses RNA(n+1) + phosphate = RNA(n) + a ribonucleoside 5'-diphosphate. Involved in mRNA degradation. Catalyzes the phosphorolysis of single-stranded polyribonucleotides processively in the 3'- to 5'-direction. This Aliivibrio fischeri (strain MJ11) (Vibrio fischeri) protein is Polyribonucleotide nucleotidyltransferase.